A 273-amino-acid polypeptide reads, in one-letter code: Undecaprenyl-diphosphatase (273 aa).

7 consecutive transmembrane segments (helical) span residues 45-65 (AKTF…VMFW), 90-110 (LTLI…LIFH), 116-136 (LFNP…LIAA), 154-173 (YRQA…PGFS), 190-210 (YAAS…ATAL), 222-242 (ADFP…LVAI), and 252-272 (ISFI…YVVF).

It belongs to the UppP family.

The protein localises to the cell inner membrane. The catalysed reaction is di-trans,octa-cis-undecaprenyl diphosphate + H2O = di-trans,octa-cis-undecaprenyl phosphate + phosphate + H(+). Catalyzes the dephosphorylation of undecaprenyl diphosphate (UPP). Confers resistance to bacitracin. In Enterobacter sp. (strain 638), this protein is Undecaprenyl-diphosphatase.